The primary structure comprises 290 residues: Bifunctional protein FolD (290 aa).

NADP(+)-binding positions include 166–168 and Ile-232; that span reads GAS.

Belongs to the tetrahydrofolate dehydrogenase/cyclohydrolase family. In terms of assembly, homodimer.

The enzyme catalyses (6R)-5,10-methylene-5,6,7,8-tetrahydrofolate + NADP(+) = (6R)-5,10-methenyltetrahydrofolate + NADPH. It catalyses the reaction (6R)-5,10-methenyltetrahydrofolate + H2O = (6R)-10-formyltetrahydrofolate + H(+). The protein operates within one-carbon metabolism; tetrahydrofolate interconversion. Functionally, catalyzes the oxidation of 5,10-methylenetetrahydrofolate to 5,10-methenyltetrahydrofolate and then the hydrolysis of 5,10-methenyltetrahydrofolate to 10-formyltetrahydrofolate. The protein is Bifunctional protein FolD of Proteus mirabilis (strain HI4320).